The sequence spans 62 residues: Small ribosomal subunit protein uS14 (62 aa).

Zn(2+) is bound by residues C25, C28, C41, and C44.

The protein belongs to the universal ribosomal protein uS14 family. Zinc-binding uS14 subfamily. As to quaternary structure, part of the 30S ribosomal subunit. Contacts proteins S3 and S10. The cofactor is Zn(2+).

Functionally, binds 16S rRNA, required for the assembly of 30S particles and may also be responsible for determining the conformation of the 16S rRNA at the A site. The protein is Small ribosomal subunit protein uS14 of Hydrogenobaculum sp. (strain Y04AAS1).